Consider the following 70-residue polypeptide: Probable ferredoxin TA0517 (70 aa).

4Fe-4S ferredoxin-type domains are found at residues 8 to 36 (TEMD…WLDE) and 37 to 66 (TVIK…AEWF). [4Fe-4S] cluster contacts are provided by Cys17, Cys20, Cys23, Cys27, Cys46, Cys49, Cys52, and Cys56.

The cofactor is [4Fe-4S] cluster.

Ferredoxins are iron-sulfur proteins that transfer electrons in a wide variety of metabolic reactions. The protein is Probable ferredoxin TA0517 of Thermoplasma acidophilum (strain ATCC 25905 / DSM 1728 / JCM 9062 / NBRC 15155 / AMRC-C165).